Reading from the N-terminus, the 299-residue chain is Probable 4-deoxy-4-formamido-L-arabinose-phosphoundecaprenol deformylase ArnD (299 aa).

Residues 2–263 enclose the NodB homology domain; sequence IDVGLRIDVD…EASARGIRFV (262 aa).

The protein belongs to the polysaccharide deacetylase family. ArnD deformylase subfamily.

The enzyme catalyses 4-deoxy-4-formamido-alpha-L-arabinopyranosyl di-trans,octa-cis-undecaprenyl phosphate + H2O = 4-amino-4-deoxy-alpha-L-arabinopyranosyl di-trans,octa-cis-undecaprenyl phosphate + formate. The protein operates within glycolipid biosynthesis; 4-amino-4-deoxy-alpha-L-arabinose undecaprenyl phosphate biosynthesis; 4-amino-4-deoxy-alpha-L-arabinose undecaprenyl phosphate from UDP-4-deoxy-4-formamido-beta-L-arabinose and undecaprenyl phosphate: step 2/2. It participates in bacterial outer membrane biogenesis; lipopolysaccharide biosynthesis. In terms of biological role, catalyzes the deformylation of 4-deoxy-4-formamido-L-arabinose-phosphoundecaprenol to 4-amino-4-deoxy-L-arabinose-phosphoundecaprenol. The modified arabinose is attached to lipid A and is required for resistance to polymyxin and cationic antimicrobial peptides. The chain is Probable 4-deoxy-4-formamido-L-arabinose-phosphoundecaprenol deformylase ArnD from Aeromonas salmonicida (strain A449).